A 227-amino-acid chain; its full sequence is Cytochrome c oxidase subunit 2 (227 aa).

At 1–14 the chain is on the mitochondrial intermembrane side; sequence MAYPFQLGLQDATS. A helical transmembrane segment spans residues 15 to 45; the sequence is PIMEELTNFHDHTLMIVFLISSLVLYLISLM. Residues 46–59 lie on the Mitochondrial matrix side of the membrane; that stretch reads LTTKLIHTNTMDAQ. A helical transmembrane segment spans residues 60–87; that stretch reads EVETVWTILPAIILIMIALPSLRILYLM. The Mitochondrial intermembrane portion of the chain corresponds to 88-227; the sequence is DEINNPVLTV…LFENWSTSMI (140 aa). 6 residues coordinate Cu cation: His-161, Cys-196, Glu-198, Cys-200, His-204, and Met-207. Residue Glu-198 participates in Mg(2+) binding.

The protein belongs to the cytochrome c oxidase subunit 2 family. As to quaternary structure, component of the cytochrome c oxidase (complex IV, CIV), a multisubunit enzyme composed of 14 subunits. The complex is composed of a catalytic core of 3 subunits MT-CO1, MT-CO2 and MT-CO3, encoded in the mitochondrial DNA, and 11 supernumerary subunits COX4I, COX5A, COX5B, COX6A, COX6B, COX6C, COX7A, COX7B, COX7C, COX8 and NDUFA4, which are encoded in the nuclear genome. The complex exists as a monomer or a dimer and forms supercomplexes (SCs) in the inner mitochondrial membrane with NADH-ubiquinone oxidoreductase (complex I, CI) and ubiquinol-cytochrome c oxidoreductase (cytochrome b-c1 complex, complex III, CIII), resulting in different assemblies (supercomplex SCI(1)III(2)IV(1) and megacomplex MCI(2)III(2)IV(2)). Found in a complex with TMEM177, COA6, COX18, COX20, SCO1 and SCO2. Interacts with TMEM177 in a COX20-dependent manner. Interacts with COX20. Interacts with COX16. The cofactor is Cu cation.

It localises to the mitochondrion inner membrane. It catalyses the reaction 4 Fe(II)-[cytochrome c] + O2 + 8 H(+)(in) = 4 Fe(III)-[cytochrome c] + 2 H2O + 4 H(+)(out). Its function is as follows. Component of the cytochrome c oxidase, the last enzyme in the mitochondrial electron transport chain which drives oxidative phosphorylation. The respiratory chain contains 3 multisubunit complexes succinate dehydrogenase (complex II, CII), ubiquinol-cytochrome c oxidoreductase (cytochrome b-c1 complex, complex III, CIII) and cytochrome c oxidase (complex IV, CIV), that cooperate to transfer electrons derived from NADH and succinate to molecular oxygen, creating an electrochemical gradient over the inner membrane that drives transmembrane transport and the ATP synthase. Cytochrome c oxidase is the component of the respiratory chain that catalyzes the reduction of oxygen to water. Electrons originating from reduced cytochrome c in the intermembrane space (IMS) are transferred via the dinuclear copper A center (CU(A)) of subunit 2 and heme A of subunit 1 to the active site in subunit 1, a binuclear center (BNC) formed by heme A3 and copper B (CU(B)). The BNC reduces molecular oxygen to 2 water molecules using 4 electrons from cytochrome c in the IMS and 4 protons from the mitochondrial matrix. The sequence is that of Cytochrome c oxidase subunit 2 (MT-CO2) from Gerbillurus vallinus (Brush-tailed hairy-footed gerbil).